A 427-amino-acid polypeptide reads, in one-letter code: Peptidase B (427 aa).

Positions 195 and 200 each coordinate Mn(2+). The active site involves lysine 207. Aspartate 218, aspartate 277, and glutamate 279 together coordinate Mn(2+). Residue arginine 281 is part of the active site.

Belongs to the peptidase M17 family. As to quaternary structure, homohexamer. Mn(2+) serves as cofactor.

The protein localises to the cytoplasm. It carries out the reaction Release of an N-terminal amino acid, Xaa, from a peptide or arylamide. Xaa is preferably Glu or Asp but may be other amino acids, including Leu, Met, His, Cys and Gln.. Probably plays an important role in intracellular peptide degradation. In Escherichia coli O139:H28 (strain E24377A / ETEC), this protein is Peptidase B.